The primary structure comprises 368 residues: Transaldolase (368 aa).

Catalysis depends on lysine 140, which acts as the Schiff-base intermediate with substrate.

The protein belongs to the transaldolase family. Type 2 subfamily.

It is found in the cytoplasm. The enzyme catalyses D-sedoheptulose 7-phosphate + D-glyceraldehyde 3-phosphate = D-erythrose 4-phosphate + beta-D-fructose 6-phosphate. Its pathway is carbohydrate degradation; pentose phosphate pathway; D-glyceraldehyde 3-phosphate and beta-D-fructose 6-phosphate from D-ribose 5-phosphate and D-xylulose 5-phosphate (non-oxidative stage): step 2/3. Transaldolase is important for the balance of metabolites in the pentose-phosphate pathway. This Thermobifida fusca (strain YX) protein is Transaldolase.